A 299-amino-acid polypeptide reads, in one-letter code: GTPase Era (299 aa).

The 169-residue stretch at 9–177 (RSGSVAVIGR…VGDLLKLVPE (169 aa)) folds into the Era-type G domain. Residues 17-24 (GRPNVGKS) form a G1 region. 17–24 (GRPNVGKS) contributes to the GTP binding site. Positions 43-47 (QTTRH) are G2. Residues 64 to 67 (DTPG) are G3. GTP is bound by residues 64-68 (DTPGL) and 126-129 (NKVD). The segment at 126 to 129 (NKVD) is G4. The segment at 156 to 158 (VSA) is G5. A KH type-2 domain is found at 200–284 (VREQLMRQLG…FLETWVRVRE (85 aa)).

The protein belongs to the TRAFAC class TrmE-Era-EngA-EngB-Septin-like GTPase superfamily. Era GTPase family. In terms of assembly, monomer.

The protein localises to the cytoplasm. It localises to the cell inner membrane. Its function is as follows. An essential GTPase that binds both GDP and GTP, with rapid nucleotide exchange. Plays a role in 16S rRNA processing and 30S ribosomal subunit biogenesis and possibly also in cell cycle regulation and energy metabolism. The protein is GTPase Era of Xanthomonas oryzae pv. oryzae (strain MAFF 311018).